The following is a 620-amino-acid chain: Siderophore iron transporter ARN2 (620 aa).

The interval 1 to 42 (MIEVPEDNRSSQTKRKNTEKNCNELMVDEKMDDDSSPRDEMK) is disordered. A compositionally biased stretch (basic and acidic residues) spans 16–42 (KNTEKNCNELMVDEKMDDDSSPRDEMK). The next 14 helical transmembrane spans lie at 71–93 (IFLFSAFICTFAYGLDSSIRGTY), 106–128 (LISTVSVIVLMISAVSQVIFGGL), 135–152 (LTLFLVSIVLYIVGTIIQ), 162–184 (AAGAVFYYVGLVGVMLQVVLMLS), 191–213 (WRLFYTLIPSWPSIITTWVSGSV), 223–245 (WSWNIAMWAFIFPLCCIPLILCM), 286–308 (VVGVLLFTAGVGCILVPLTLAGG), 318–335 (IIGPFVLGFVLVPGFIYW), 355–377 (VWAPLGIMFFICFVYQMAAGYLY), 392–414 (TRIINLYSFVTAVVAPFLGLIVT), 421–438 (SYIIFGGSLYFITMGLFY), 448–470 (GGIIAGMVIWGLSSCLFDYPTIV), 491–513 (VFRIGGAVAAAISGAIWTQSLYP), and 561–578 (VIVALVFSAPMFLLTFCV).

The protein belongs to the major facilitator superfamily.

It is found in the endosome membrane. Functionally, involved in the transport of siderophore triacestylfusarinine C and so has a role in iron homeostasis. The protein is Siderophore iron transporter ARN2 (ARN2) of Saccharomyces cerevisiae (strain ATCC 204508 / S288c) (Baker's yeast).